Consider the following 354-residue polypeptide: Fe(3+) ions import ATP-binding protein FbpC (354 aa).

The 233-residue stretch at 4–236 folds into the ABC transporter domain; sequence LELHAVHKSF…PRDAQTALFL (233 aa). An ATP-binding site is contributed by 36–43; sequence GPSGSGKT.

The protein belongs to the ABC transporter superfamily. Fe(3+) ion importer (TC 3.A.1.10) family. As to quaternary structure, the complex is composed of two ATP-binding proteins (FbpC), two transmembrane proteins (FbpB) and a solute-binding protein (FbpA).

Its subcellular location is the cell inner membrane. The enzyme catalyses Fe(3+)(out) + ATP + H2O = Fe(3+)(in) + ADP + phosphate + H(+). In terms of biological role, part of the ABC transporter complex FbpABC involved in Fe(3+) ions import. Responsible for energy coupling to the transport system. The polypeptide is Fe(3+) ions import ATP-binding protein FbpC (Pseudomonas fluorescens (strain ATCC BAA-477 / NRRL B-23932 / Pf-5)).